We begin with the raw amino-acid sequence, 929 residues long: Type I restriction enzyme SauCOLORF180P endonuclease subunit (929 aa).

The 165-residue stretch at 254–418 (QQATETGNNG…DGRTTADIFG (165 aa)) folds into the Helicase ATP-binding domain. 268–274 (TTGSGKT) lines the ATP pocket.

The protein belongs to the HsdR family. As to quaternary structure, the type I restriction/modification system is composed of three polypeptides R, M and S.

The enzyme catalyses Endonucleolytic cleavage of DNA to give random double-stranded fragments with terminal 5'-phosphates, ATP is simultaneously hydrolyzed.. In terms of biological role, the restriction (R) subunit of a type I restriction enzyme that recognizes an undetermined sequence and cleaves a random distance away. Subunit R is required for both nuclease and ATPase activities, but not for modification. After locating a non-methylated recognition site, the enzyme complex serves as a molecular motor that translocates DNA in an ATP-dependent manner until a collision occurs that triggers cleavage. This chain is Type I restriction enzyme SauCOLORF180P endonuclease subunit, found in Staphylococcus aureus (strain COL).